A 106-amino-acid chain; its full sequence is UPF0145 protein Cthe_0398 (106 aa).

It belongs to the UPF0145 family.

The sequence is that of UPF0145 protein Cthe_0398 from Acetivibrio thermocellus (strain ATCC 27405 / DSM 1237 / JCM 9322 / NBRC 103400 / NCIMB 10682 / NRRL B-4536 / VPI 7372) (Clostridium thermocellum).